Consider the following 82-residue polypeptide: Small ribosomal subunit protein bS18 (82 aa).

The protein belongs to the bacterial ribosomal protein bS18 family. Part of the 30S ribosomal subunit. Forms a tight heterodimer with protein bS6.

Functionally, binds as a heterodimer with protein bS6 to the central domain of the 16S rRNA, where it helps stabilize the platform of the 30S subunit. In Rhizobium meliloti (strain 1021) (Ensifer meliloti), this protein is Small ribosomal subunit protein bS18.